The sequence spans 563 residues: Pyruvate decarboxylase isozyme 2 (563 aa).

Asp28, His115, Tyr157, and Arg224 together coordinate pyruvate. Residues Thr390 and 413–415 contribute to the thiamine diphosphate site; that span reads GSI. Mg(2+) is bound at residue Asp444. Thiamine diphosphate-binding positions include 445 to 446 and 471 to 476; these read GS and NNGYTI. Positions 471 and 473 each coordinate Mg(2+). Glu477 provides a ligand contact to pyruvate.

Belongs to the TPP enzyme family. In terms of assembly, homotetramer. Mg(2+) serves as cofactor. Thiamine diphosphate is required as a cofactor.

It localises to the cytoplasm. The protein localises to the nucleus. The catalysed reaction is pyruvate + H(+) = acetaldehyde + CO2. It catalyses the reaction 3-methyl-2-oxobutanoate + H(+) = 2-methylpropanal + CO2. The enzyme catalyses (S)-3-methyl-2-oxopentanoate + H(+) = 2-methylbutanal + CO2. It carries out the reaction indole-3-pyruvate + H(+) = indole-3-acetaldehyde + CO2. The catalysed reaction is 3-phenylpyruvate + H(+) = 2-phenylacetaldehyde + CO2. It catalyses the reaction 2-oxobutanoate + H(+) = propanal + CO2. The enzyme catalyses 2-oxopentanoate + H(+) = butanal + CO2. It carries out the reaction 2 acetaldehyde = acetoin. The catalysed reaction is acetaldehyde + pyruvate + H(+) = acetoin + CO2. It functions in the pathway fermentation; ethanol fermentation. It participates in amino-acid degradation; Ehrlich pathway. Its activity is regulated as follows. Allosterically activated by its substrate, pyruvate. Second most abundant of three pyruvate decarboxylases (PDC1, PDC5, PDC6) implicated in the nonoxidative conversion of pyruvate to acetaldehyde and carbon dioxide during alcoholic fermentation. Most of the produced acetaldehyde is subsequently reduced to ethanol, but some is required for cytosolic acetyl-CoA production for biosynthetic pathways. The enzyme is also one of five 2-oxo acid decarboxylases (PDC1, PDC5, PDC6, ARO10, and THI3) able to decarboxylate more complex 2-oxo acids (alpha-keto-acids) than pyruvate, which seem mainly involved in amino acid catabolism. Here the enzyme catalyzes the decarboxylation of amino acids, which, in a first step, have been transaminated to the corresponding 2-oxo acids. In a third step, the resulting aldehydes are reduced to alcohols, collectively referred to as fusel oils or alcohols. Its preferred substrates are the transaminated amino acids derived from threonine (2-oxobutanoate), norvaline (2-oxopentanoate), valine (3-methyl-2-oxobutanoate, also alpha-keto-isovalerate), isoleucine ((3S)-3-methyl-2-oxopentanoate, also alpha-keto-beta-methylvalerate), phenylalanine (phenylpyruvate), and tryptophan (3-(indol-3-yl)pyruvate), whereas transaminated leucine is no substrate. In a side-reaction the carbanionic intermediate (or active aldehyde) generated by decarboxylation or by activation of an aldehyde can react with an aldehyde via condensation (or carboligation) yielding a 2-hydroxy ketone, collectively called acyloins. This chain is Pyruvate decarboxylase isozyme 2 (PDC5), found in Saccharomyces cerevisiae (strain ATCC 204508 / S288c) (Baker's yeast).